A 239-amino-acid chain; its full sequence is Ribosomal RNA small subunit methyltransferase G (239 aa).

Residues glycine 77, phenylalanine 82, alanine 128–glutamate 129, and arginine 147 each bind S-adenosyl-L-methionine.

Belongs to the methyltransferase superfamily. RNA methyltransferase RsmG family.

The protein localises to the cytoplasm. Specifically methylates the N7 position of guanine in position 535 of 16S rRNA. This Bacillus cereus (strain G9842) protein is Ribosomal RNA small subunit methyltransferase G.